The primary structure comprises 299 residues: Dye-decolorizing peroxidase YfeX (299 aa).

Asp-143 serves as the catalytic Proton acceptor. Position 215 (His-215) interacts with heme.

This sequence belongs to the DyP-type peroxidase family. Heme b serves as cofactor.

It is found in the cytoplasm. Has both general peroxidase activity and dye-decolorizing activity. Can catalyze the oxidation of both protoporphyrinogen IX and coproporphyrinogen III to their corresponding porphyrins. Also efficiently decolorizes the dyes alizarin red and Cibacron blue F3GA. The polypeptide is Dye-decolorizing peroxidase YfeX (yfeX) (Escherichia coli (strain K12)).